A 719-amino-acid chain; its full sequence is Photosystem I P700 chlorophyll a apoprotein A1 (719 aa).

8 helical membrane-spanning segments follow: residues 61–84 (VFSAHFGQLAIIFIWLSGMYFHGA), 147–170 (LYCTATGALIFAALMLFAGWFHYH), 186–210 (LNHHLAGLLGLGSLGWAGHQVHVSL), 282–300 (TAHHHLAIAILFLIAGHMY), 337–360 (WHAQLALNLAMLGSLTIVVAHHMY), 376–402 (LSLFTHHMWIGGFLIVGAAAHAAIFMV), 424–446 (AIVSHLNWACIFLGFHSFGLYIH), and 522–540 (FLVHHIHAFTIHVTVLILL). Cys564 and Cys573 together coordinate [4Fe-4S] cluster. 2 helical membrane-spanning segments follow: residues 580–601 (HVFLGLFWMYNAISVVIFHFSW) and 655–677 (LSAYGLFFLGAHFVWAFSLMFLF). His666 serves as a coordination point for chlorophyll a'. 2 residues coordinate chlorophyll a: Met674 and Tyr682. Trp683 serves as a coordination point for phylloquinone. A helical membrane pass occupies residues 715–719 (AVGVA).

The protein belongs to the PsaA/PsaB family. The PsaA/B heterodimer binds the P700 chlorophyll special pair and subsequent electron acceptors. PSI consists of a core antenna complex that captures photons, and an electron transfer chain that converts photonic excitation into a charge separation. The eukaryotic PSI reaction center is composed of at least 11 subunits. Requires P700 is a chlorophyll a/chlorophyll a' dimer, A0 is one or more chlorophyll a, A1 is one or both phylloquinones and FX is a shared 4Fe-4S iron-sulfur center. as cofactor.

It is found in the plastid. It localises to the chloroplast thylakoid membrane. The enzyme catalyses reduced [plastocyanin] + hnu + oxidized [2Fe-2S]-[ferredoxin] = oxidized [plastocyanin] + reduced [2Fe-2S]-[ferredoxin]. Its function is as follows. PsaA and PsaB bind P700, the primary electron donor of photosystem I (PSI), as well as the electron acceptors A0, A1 and FX. PSI is a plastocyanin-ferredoxin oxidoreductase, converting photonic excitation into a charge separation, which transfers an electron from the donor P700 chlorophyll pair to the spectroscopically characterized acceptors A0, A1, FX, FA and FB in turn. Oxidized P700 is reduced on the lumenal side of the thylakoid membrane by plastocyanin. In Torreya californica (California nutmeg), this protein is Photosystem I P700 chlorophyll a apoprotein A1.